The primary structure comprises 368 residues: 3-isopropylmalate dehydrogenase (368 aa).

An NAD(+)-binding site is contributed by 80–93; that stretch reads GPKWDNLEFSKKPE. Arg-100, Arg-110, Arg-138, and Asp-229 together coordinate substrate. Positions 229, 253, and 257 each coordinate Mg(2+). 292–304 is a binding site for NAD(+); it reads GSAPDIAGKEIAN.

This sequence belongs to the isocitrate and isopropylmalate dehydrogenases family. LeuB type 1 subfamily. Homodimer. Requires Mg(2+) as cofactor. Mn(2+) is required as a cofactor.

The protein resides in the cytoplasm. The enzyme catalyses (2R,3S)-3-isopropylmalate + NAD(+) = 4-methyl-2-oxopentanoate + CO2 + NADH. It participates in amino-acid biosynthesis; L-leucine biosynthesis; L-leucine from 3-methyl-2-oxobutanoate: step 3/4. Catalyzes the oxidation of 3-carboxy-2-hydroxy-4-methylpentanoate (3-isopropylmalate) to 3-carboxy-4-methyl-2-oxopentanoate. The product decarboxylates to 4-methyl-2 oxopentanoate. The chain is 3-isopropylmalate dehydrogenase from Pelagibacter ubique (strain HTCC1062).